Reading from the N-terminus, the 238-residue chain is Ribosomal RNA small subunit methyltransferase G (238 aa).

Residues Gly-77, Phe-82, 128–129, and Arg-147 contribute to the S-adenosyl-L-methionine site; that span reads AE.

It belongs to the methyltransferase superfamily. RNA methyltransferase RsmG family.

It is found in the cytoplasm. Its function is as follows. Specifically methylates the N7 position of guanine in position 535 of 16S rRNA. This chain is Ribosomal RNA small subunit methyltransferase G, found in Geobacillus sp. (strain WCH70).